A 156-amino-acid polypeptide reads, in one-letter code: Ribosomal RNA large subunit methyltransferase H (156 aa).

S-adenosyl-L-methionine contacts are provided by residues Leu73, Gly104, and Leu123 to Leu128.

The protein belongs to the RNA methyltransferase RlmH family. Homodimer.

The protein resides in the cytoplasm. The catalysed reaction is pseudouridine(1915) in 23S rRNA + S-adenosyl-L-methionine = N(3)-methylpseudouridine(1915) in 23S rRNA + S-adenosyl-L-homocysteine + H(+). In terms of biological role, specifically methylates the pseudouridine at position 1915 (m3Psi1915) in 23S rRNA. In Photobacterium profundum (strain SS9), this protein is Ribosomal RNA large subunit methyltransferase H.